Reading from the N-terminus, the 917-residue chain is Protein translocase subunit SecA 1 (917 aa).

ATP-binding positions include Gln-87, 105–109 (GEGKT), and Asp-507. The disordered stretch occupies residues 866–917 (EKSPESIGEDIEGREHPQKHQPFVRQGEKIGRNDPCPCGSGKKYKQCHGKLN). Zn(2+)-binding residues include Cys-901, Cys-903, Cys-912, and His-913. Over residues 907 to 917 (KKYKQCHGKLN) the composition is skewed to basic residues.

Belongs to the SecA family. As to quaternary structure, monomer and homodimer. Part of the essential Sec protein translocation apparatus which comprises SecA, SecYEG and auxiliary proteins SecDF-YajC and YidC. It depends on Zn(2+) as a cofactor.

It is found in the cell inner membrane. It localises to the cytoplasm. The enzyme catalyses ATP + H2O + cellular proteinSide 1 = ADP + phosphate + cellular proteinSide 2.. Part of the Sec protein translocase complex. Interacts with the SecYEG preprotein conducting channel. Has a central role in coupling the hydrolysis of ATP to the transfer of proteins into and across the cell membrane, serving both as a receptor for the preprotein-SecB complex and as an ATP-driven molecular motor driving the stepwise translocation of polypeptide chains across the membrane. The protein is Protein translocase subunit SecA 1 of Nitrosospira multiformis (strain ATCC 25196 / NCIMB 11849 / C 71).